We begin with the raw amino-acid sequence, 355 residues long: 3,4-dihydroxy-2-butanone 4-phosphate synthase (355 aa).

The tract at residues 1-202 (MYHKRIKEAI…VSDIIQYRLN (202 aa)) is DHBP synthase. D-ribulose 5-phosphate contacts are provided by residues 27–28 (RE), aspartate 32, 139–143 (RTGHT), and glutamate 163. Glutamate 28 contacts Mg(2+). Histidine 142 lines the Mg(2+) pocket. Residues 203–355 (FENLLREITR…NLHLVEKIEV (153 aa)) form a GTP cyclohydrolase II-like region.

In the N-terminal section; belongs to the DHBP synthase family. This sequence in the C-terminal section; belongs to the GTP cyclohydrolase II family. It depends on Mg(2+) as a cofactor. Mn(2+) is required as a cofactor.

It catalyses the reaction D-ribulose 5-phosphate = (2S)-2-hydroxy-3-oxobutyl phosphate + formate + H(+). It functions in the pathway cofactor biosynthesis; riboflavin biosynthesis; 2-hydroxy-3-oxobutyl phosphate from D-ribulose 5-phosphate: step 1/1. Its function is as follows. Catalyzes the conversion of D-ribulose 5-phosphate to formate and 3,4-dihydroxy-2-butanone 4-phosphate. This is 3,4-dihydroxy-2-butanone 4-phosphate synthase (ribB) from Helicobacter hepaticus (strain ATCC 51449 / 3B1).